The primary structure comprises 115 residues: NAD(P)H-quinone oxidoreductase subunit M (115 aa).

The protein belongs to the complex I NdhM subunit family. In terms of assembly, NDH-1 can be composed of about 15 different subunits; different subcomplexes with different compositions have been identified which probably have different functions.

It localises to the cellular thylakoid membrane. The catalysed reaction is a plastoquinone + NADH + (n+1) H(+)(in) = a plastoquinol + NAD(+) + n H(+)(out). It carries out the reaction a plastoquinone + NADPH + (n+1) H(+)(in) = a plastoquinol + NADP(+) + n H(+)(out). In terms of biological role, NDH-1 shuttles electrons from an unknown electron donor, via FMN and iron-sulfur (Fe-S) centers, to quinones in the respiratory and/or the photosynthetic chain. The immediate electron acceptor for the enzyme in this species is believed to be plastoquinone. Couples the redox reaction to proton translocation, and thus conserves the redox energy in a proton gradient. Cyanobacterial NDH-1 also plays a role in inorganic carbon-concentration. This Synechococcus sp. (strain CC9605) protein is NAD(P)H-quinone oxidoreductase subunit M.